Here is a 519-residue protein sequence, read N- to C-terminus: Seed lectin (519 aa).

Cystine bridges form between C249/C258 and C274/C293. 2 Ricin B-type lectin domains span residues E261 to G387 and V390 to F518. Residues D271 to S311 form a 1-alpha repeat. A carbohydrate contacts are provided by residues D276–G279 and Q296–N298. The 1-beta repeat unit spans residues L312–N352. C315 and C332 are disulfide-bonded. Residues E356–N388 form a 1-gamma repeat. N370 carries an N-linked (GlcNAc...) asparagine glycan. Residues D401–V438 form a 2-alpha repeat. 2 disulfide bridges follow: C404–C419 and C445–C464. The stretch at R442–T482 is one 2-beta repeat. A carbohydrate contacts are provided by residues D454, D491–R494, H505–H508, and N512. The stretch at Q486–Q513 is one 2-gamma repeat.

In the N-terminal section; belongs to the ribosome-inactivating protein family. Type 2 RIP subfamily. As to quaternary structure, heterotrimer consisting of Aalpha, Abeta and B chains with Abeta and B being disulfide-linked.

Its function is as follows. Seed lectin similar to type 2 ribosome-inactivating proteins. The Aalpha and Abeta chains constitute the rRNA glycosidase domain and the B chain the carbohydrate-binding lectin domain. Is predicted to have no glycosidase activity and, hence, to be non-toxic, due to small changes in both the nucleotide binding and carbohydrate binding capabilities. Binds galactose and derivatives with a preference for the beta-anomeric forms. Binds prophyrins. Has hemagglutinating activity towards rabbit and human erythrocytes. The polypeptide is Seed lectin (Trichosanthes anguina (Snake gourd)).